Reading from the N-terminus, the 202-residue chain is LexA repressor (202 aa).

The segment at residues 28-48 (RAEIAQRLGFRSPNAAEEHLK) is a DNA-binding region (H-T-H motif). Residues Ser-119 and Lys-156 each act as for autocatalytic cleavage activity in the active site.

The protein belongs to the peptidase S24 family. Homodimer.

It catalyses the reaction Hydrolysis of Ala-|-Gly bond in repressor LexA.. Functionally, represses a number of genes involved in the response to DNA damage (SOS response), including recA and lexA. Binds to the 16 bp palindromic sequence 5'-CTGTATATATATACAG-3'. In the presence of single-stranded DNA, RecA interacts with LexA causing an autocatalytic cleavage which disrupts the DNA-binding part of LexA, leading to derepression of the SOS regulon and eventually DNA repair. This chain is LexA repressor, found in Escherichia coli (strain K12 / MC4100 / BW2952).